The sequence spans 231 residues: Beta-casein (231 aa).

Positions 1-15 (MKVFILACLVALALA) are cleaved as a signal peptide. Position 24 is a phosphoserine (Ser-24). Thr-27 bears the Phosphothreonine mark. 3 positions are modified to phosphoserine: Ser-29, Ser-31, and Ser-32.

The protein belongs to the beta-casein family. As to expression, mammary gland specific. Secreted in milk.

Its subcellular location is the secreted. Important role in determination of the surface properties of the casein micelles. The chain is Beta-casein (Csn2) from Rattus norvegicus (Rat).